A 124-amino-acid chain; its full sequence is Fluoride-specific ion channel FluC (124 aa).

Transmembrane regions (helical) follow at residues 4–24 (LLFV…MSII), 35–55 (FGTL…YALG), 62–82 (PELK…FSTF), and 95–115 (WFKS…MVYL). The Na(+) site is built by Gly-74 and Thr-77.

It belongs to the fluoride channel Fluc/FEX (TC 1.A.43) family.

Its subcellular location is the cell inner membrane. The enzyme catalyses fluoride(in) = fluoride(out). Na(+) is not transported, but it plays an essential structural role and its presence is essential for fluoride channel function. Functionally, fluoride-specific ion channel. Important for reducing fluoride concentration in the cell, thus reducing its toxicity. The sequence is that of Fluoride-specific ion channel FluC from Shewanella denitrificans (strain OS217 / ATCC BAA-1090 / DSM 15013).